A 98-amino-acid chain; its full sequence is MAITLLEGALYGFFAVTGVLIASFIIGEIVHLYNEKQSNENFAKAIDQMSKSTVTAIESIKDTTVTGINALLNMDTLRDVNSLAREKAKDQNPSSQAK.

A helical membrane pass occupies residues 10 to 30; the sequence is LYGFFAVTGVLIASFIIGEIV.

Its subcellular location is the host membrane. This is an uncharacterized protein from Saccharolobus islandicus (Sulfolobus islandicus).